The primary structure comprises 427 residues: Glutamate-1-semialdehyde 2,1-aminomutase (427 aa).

An N6-(pyridoxal phosphate)lysine modification is found at Lys-265.

The protein belongs to the class-III pyridoxal-phosphate-dependent aminotransferase family. HemL subfamily. Homodimer. It depends on pyridoxal 5'-phosphate as a cofactor.

The protein localises to the cytoplasm. The enzyme catalyses (S)-4-amino-5-oxopentanoate = 5-aminolevulinate. It participates in porphyrin-containing compound metabolism; protoporphyrin-IX biosynthesis; 5-aminolevulinate from L-glutamyl-tRNA(Glu): step 2/2. This chain is Glutamate-1-semialdehyde 2,1-aminomutase, found in Burkholderia ambifaria (strain MC40-6).